The primary structure comprises 147 residues: Lipoprotein YfjS (147 aa).

Positions 1-20 (MKRKTLPLLALVATSLFLSA) are cleaved as a signal peptide. Cysteine 21 is lipidated: N-palmitoyl cysteine. Cysteine 21 carries the S-diacylglycerol cysteine lipid modification.

The protein to E.coli YafY.

Its subcellular location is the cell inner membrane. Does not induce degP when overexpressed unless it is mutated to resemble YafY. This Escherichia coli (strain K12) protein is Lipoprotein YfjS (yfjS).